We begin with the raw amino-acid sequence, 553 residues long: CTP synthase (553 aa).

Residues 1–275 are amidoligase domain; it reads MPTETEYDPS…DQYVMEQFDM (275 aa). Ser-24 is a CTP binding site. Ser-24 contacts UTP. ATP is bound at residue 25-30; that stretch reads GLGKGI. Residue Tyr-65 coordinates L-glutamine. Residue Asp-82 coordinates ATP. Mg(2+)-binding residues include Asp-82 and Glu-150. Residues 157–159, 196–201, and Lys-232 each bind CTP; these read DIE and KTKPTQ. UTP contacts are provided by residues 196–201 and Lys-232; that span reads KTKPTQ. A Glutamine amidotransferase type-1 domain is found at 308-540; sequence KYALEDAYMS…LDAVLERADV (233 aa). Gly-362 provides a ligand contact to L-glutamine. Cys-389 (nucleophile; for glutamine hydrolysis) is an active-site residue. Residues 390–393, Glu-413, and Arg-470 contribute to the L-glutamine site; that span reads LGFQ. Residues His-513 and Glu-515 contribute to the active site.

Belongs to the CTP synthase family. As to quaternary structure, homotetramer.

It catalyses the reaction UTP + L-glutamine + ATP + H2O = CTP + L-glutamate + ADP + phosphate + 2 H(+). The catalysed reaction is L-glutamine + H2O = L-glutamate + NH4(+). The enzyme catalyses UTP + NH4(+) + ATP = CTP + ADP + phosphate + 2 H(+). Its pathway is pyrimidine metabolism; CTP biosynthesis via de novo pathway; CTP from UDP: step 2/2. Its activity is regulated as follows. Allosterically activated by GTP, when glutamine is the substrate; GTP has no effect on the reaction when ammonia is the substrate. The allosteric effector GTP functions by stabilizing the protein conformation that binds the tetrahedral intermediate(s) formed during glutamine hydrolysis. Inhibited by the product CTP, via allosteric rather than competitive inhibition. In terms of biological role, catalyzes the ATP-dependent amination of UTP to CTP with either L-glutamine or ammonia as the source of nitrogen. Regulates intracellular CTP levels through interactions with the four ribonucleotide triphosphates. This is CTP synthase from Halobacterium salinarum (strain ATCC 29341 / DSM 671 / R1).